We begin with the raw amino-acid sequence, 448 residues long: Bifunctional protein GlmU (448 aa).

The segment at 1–232 (MSERSLLVVV…VDEVAGVNSR (232 aa)) is pyrophosphorylase. Residues 11–14 (LAAG), lysine 25, glutamine 78, and 83–84 (GT) contribute to the UDP-N-acetyl-alpha-D-glucosamine site. Aspartate 108 lines the Mg(2+) pocket. Positions 144, 158, 173, and 230 each coordinate UDP-N-acetyl-alpha-D-glucosamine. Asparagine 230 contacts Mg(2+). Residues 233–253 (LQLAEAEAILQGRLRRAAMAG) form a linker region. The tract at residues 254-448 (GATLVAPETV…LRAARGKPKV (195 aa)) is N-acetyltransferase. Residues arginine 319 and lysine 337 each contribute to the UDP-N-acetyl-alpha-D-glucosamine site. Histidine 349 acts as the Proton acceptor in catalysis. The UDP-N-acetyl-alpha-D-glucosamine site is built by tyrosine 352 and asparagine 363. Acetyl-CoA contacts are provided by residues alanine 366, 372 to 373 (NY), serine 409, and arginine 426.

This sequence in the N-terminal section; belongs to the N-acetylglucosamine-1-phosphate uridyltransferase family. It in the C-terminal section; belongs to the transferase hexapeptide repeat family. Homotrimer. The cofactor is Mg(2+).

Its subcellular location is the cytoplasm. It catalyses the reaction alpha-D-glucosamine 1-phosphate + acetyl-CoA = N-acetyl-alpha-D-glucosamine 1-phosphate + CoA + H(+). The enzyme catalyses N-acetyl-alpha-D-glucosamine 1-phosphate + UTP + H(+) = UDP-N-acetyl-alpha-D-glucosamine + diphosphate. It participates in nucleotide-sugar biosynthesis; UDP-N-acetyl-alpha-D-glucosamine biosynthesis; N-acetyl-alpha-D-glucosamine 1-phosphate from alpha-D-glucosamine 6-phosphate (route II): step 2/2. Its pathway is nucleotide-sugar biosynthesis; UDP-N-acetyl-alpha-D-glucosamine biosynthesis; UDP-N-acetyl-alpha-D-glucosamine from N-acetyl-alpha-D-glucosamine 1-phosphate: step 1/1. The protein operates within bacterial outer membrane biogenesis; LPS lipid A biosynthesis. Its function is as follows. Catalyzes the last two sequential reactions in the de novo biosynthetic pathway for UDP-N-acetylglucosamine (UDP-GlcNAc). The C-terminal domain catalyzes the transfer of acetyl group from acetyl coenzyme A to glucosamine-1-phosphate (GlcN-1-P) to produce N-acetylglucosamine-1-phosphate (GlcNAc-1-P), which is converted into UDP-GlcNAc by the transfer of uridine 5-monophosphate (from uridine 5-triphosphate), a reaction catalyzed by the N-terminal domain. This Azorhizobium caulinodans (strain ATCC 43989 / DSM 5975 / JCM 20966 / LMG 6465 / NBRC 14845 / NCIMB 13405 / ORS 571) protein is Bifunctional protein GlmU.